The sequence spans 391 residues: Yellow-related salivary protein ASP4 (391 aa).

The first 18 residues, 1–18 (MKIFLCIIAVVSLQGVVA), serve as a signal peptide directing secretion. N-linked (GlcNAc...) asparagine glycosylation is present at N29.

It belongs to the major royal jelly protein family. As to expression, female salivary gland (at protein level).

It is found in the secreted. Probably modulates blood feeding of sand flies on vertebrate species by binding and sequestering different mediators involved in the host response. Binds biogenic amines. Binds serotonin and dopamine with high affinity. Binds adrenaline, octopamine and adrenaline with medium affinity. Binds histamine with low affinity. The protein is Yellow-related salivary protein ASP4 of Phlebotomus orientalis (Phlebotomine sand fly).